The following is a 185-amino-acid chain: Elongation factor P (185 aa).

This sequence belongs to the elongation factor P family.

Its subcellular location is the cytoplasm. Its pathway is protein biosynthesis; polypeptide chain elongation. Involved in peptide bond synthesis. Stimulates efficient translation and peptide-bond synthesis on native or reconstituted 70S ribosomes in vitro. Probably functions indirectly by altering the affinity of the ribosome for aminoacyl-tRNA, thus increasing their reactivity as acceptors for peptidyl transferase. The chain is Elongation factor P from Clostridium tetani (strain Massachusetts / E88).